Consider the following 796-residue polypeptide: DNA damage-responsive transcriptional repressor RPH1 (796 aa).

The 42-residue stretch at 14–55 (VPVFKPTYEQFEDFYAYCKAINKYGMKSGVVKVIPPKEWKDK) folds into the JmjN domain. The JmjC domain maps to 193 to 355 (PEGLNVWNVA…IGKKAGKCHC (163 aa)). Thr399 carries the post-translational modification Phosphothreonine. Residues Ser430, Ser459, Ser557, Ser561, Ser575, and Ser584 each carry the phosphoserine modification. The short motif at 455–471 (KRISSFQEQPLNKLLKR) is the Bipartite nuclear localization signal element. Residues 599-692 (RQQHSQQHSF…DKEQGSSPLN (94 aa)) form a disordered region. The segment covering 601–621 (QHSQQHSFSTPSTVSNLSTSV) has biased composition (polar residues). A compositionally biased stretch (basic and acidic residues) spans 629–640 (NDIKTPHPERPN). Residue Ser652 is modified to Phosphoserine. Residues 654–669 (VETSKSNLILSKVAST) show a composition bias toward polar residues. Residues 670-686 (RQEDSFTSRNDDLDKEQ) show a composition bias toward basic and acidic residues. Ser689 carries the phosphoserine modification. The C2H2-type 1 zinc finger occupies 709–732 (YICKECQRKFSSGHHLTRHKKSVH). The C2H2-type 2; atypical zinc finger occupies 738-763 (HSCPKCGKRFKRRDHVLQHLNKKIPC). The tract at residues 774-796 (IMNPTVQPQDGKAAINQQSTPLN) is disordered.

Post-translationally, RAD53-dependent phosphorylated in response to DNA damage.

The protein resides in the nucleus. Its function is as follows. Transcriptional repressor of photolyase PHR1. Recognizes and binds the sequence AG(4) in the upstream repressing sequence of PHR1. Derepresses PHR1 transcription when phosphorylated. The sequence is that of DNA damage-responsive transcriptional repressor RPH1 (RPH1) from Saccharomyces cerevisiae (strain ATCC 204508 / S288c) (Baker's yeast).